Here is a 75-residue protein sequence, read N- to C-terminus: uncharacterized protein (75 aa).

The next 2 membrane-spanning stretches (helical) occupy residues 7–26 (LINAVFRIACGLTIMSAASA) and 36–58 (MHLFYIFMGAMKAGSGILRFCPV).

The protein resides in the cell membrane. This is an uncharacterized protein from Bacillus subtilis (strain 168).